A 199-amino-acid chain; its full sequence is Urease accessory protein UreG (199 aa).

8-15 is a GTP binding site; sequence GPVGSGKT.

This sequence belongs to the SIMIBI class G3E GTPase family. UreG subfamily. In terms of assembly, homodimer. UreH, UreF and UreG form a complex that acts as a GTP-hydrolysis-dependent molecular chaperone, activating the urease apoprotein by helping to assemble the nickel containing metallocenter of UreC. The UreE protein probably delivers the nickel.

It is found in the cytoplasm. In terms of biological role, facilitates the functional incorporation of the urease nickel metallocenter. This process requires GTP hydrolysis, probably effectuated by UreG. This Helicobacter pylori (strain J99 / ATCC 700824) (Campylobacter pylori J99) protein is Urease accessory protein UreG.